The following is a 247-amino-acid chain: E3 SUMO-protein ligase NSE2 (247 aa).

At M1 the chain carries N-acetylmethionine. Residues K90 and K107 each participate in a glycyl lysine isopeptide (Lys-Gly) (interchain with G-Cter in SUMO2) cross-link. The residue at position 116 (S116) is a Phosphoserine. Residues K125 and K130 each participate in a glycyl lysine isopeptide (Lys-Gly) (interchain with G-Cter in SUMO2) cross-link. The SP-RING-type zinc-finger motif lies at 154–240 (VDEDMIVTQS…LRRAIESHNK (87 aa)). 4 residues coordinate Zn(2+): C185, H187, C210, and C215.

This sequence belongs to the NSE2 family. In terms of assembly, component of the SMC5-SMC6 complex which consists at least of SMC5, SMC6, NSMCE2, NSMCE1, NSMCE4A or EID3 and NSMCE3. Sumoylated, possibly via autosumoylation.

The protein localises to the nucleus. Its subcellular location is the chromosome. The protein resides in the telomere. It is found in the PML body. Its pathway is protein modification; protein sumoylation. In terms of biological role, E3 SUMO-protein ligase component of the SMC5-SMC6 complex, a complex involved in DNA double-strand break repair by homologous recombination. Is not be required for the stability of the complex. The complex may promote sister chromatid homologous recombination by recruiting the SMC1-SMC3 cohesin complex to double-strand breaks. Acts as an E3 ligase mediating SUMO attachment to various proteins such as SMC6L1 and TSNAX, the shelterin complex subunits TERF1, TERF2, TINF2 and TERF2IP, RAD51AP1, and maybe the cohesin components RAD21 and STAG2. Required for recruitment of telomeres to PML nuclear bodies. Required for sister chromatid cohesion during prometaphase and mitotic progression. The protein is E3 SUMO-protein ligase NSE2 (Nsmce2) of Mus musculus (Mouse).